The chain runs to 460 residues: Interleukin-1 receptor-associated kinase 4 (460 aa).

M1 carries the post-translational modification N-acetylmethionine. The Death domain maps to 20–104 (RKLSDFIDPQ…APASLLLPDA (85 aa)). K34 is subject to N6-acetyllysine. The region spanning 186 to 454 (SVGGNKMGEG…PDIKKVQQLL (269 aa)) is the Protein kinase domain. ATP contacts are provided by residues 192–200 (MGEGGFGVV) and K213. D311 serves as the catalytic Proton acceptor. Residues 313–316 (KSAN) and D329 contribute to the ATP site. T342 and T345 each carry phosphothreonine. At S346 the chain carries Phosphoserine.

This sequence belongs to the protein kinase superfamily. TKL Ser/Thr protein kinase family. Pelle subfamily. In terms of assembly, associates with MYD88 and IRAK2 to form a ternary complex called the Myddosome. Once phosphorylated, IRAK4 dissociates from the receptor complex and then associates with the TNF receptor-associated factor 6 (TRAF6), IRAK1, and PELI1; this intermediate complex is required for subsequent NF-kappa-B activation. Direct binding of SMAD6 to PELI1 prevents complex formation and hence negatively regulates IL1R-TLR signaling and eventually NF-kappa-B-mediated gene expression. Interacts with IL1RL1. Interacts (when phosphorylated) with IRAK1. May interact (when phosphorylated) with IRAK3. Requires Mg(2+) as cofactor. In terms of processing, phosphorylated.

It is found in the cytoplasm. It carries out the reaction L-seryl-[protein] + ATP = O-phospho-L-seryl-[protein] + ADP + H(+). The catalysed reaction is L-threonyl-[protein] + ATP = O-phospho-L-threonyl-[protein] + ADP + H(+). Its function is as follows. Serine/threonine-protein kinase that plays a critical role in initiating innate immune response against foreign pathogens. Involved in Toll-like receptor (TLR) and IL-1R signaling pathways. Is rapidly recruited by MYD88 to the receptor-signaling complex upon TLR activation to form the Myddosome together with IRAK2. Phosphorylates initially IRAK1, thus stimulating the kinase activity and intensive autophosphorylation of IRAK1. Phosphorylates E3 ubiquitin ligases Pellino proteins (PELI1, PELI2 and PELI3) to promote pellino-mediated polyubiquitination of IRAK1. Then, the ubiquitin-binding domain of IKBKG/NEMO binds to polyubiquitinated IRAK1 bringing together the IRAK1-MAP3K7/TAK1-TRAF6 complex and the NEMO-IKKA-IKKB complex. In turn, MAP3K7/TAK1 activates IKKs (CHUK/IKKA and IKBKB/IKKB) leading to NF-kappa-B nuclear translocation and activation. Alternatively, phosphorylates TIRAP to promote its ubiquitination and subsequent degradation. Phosphorylates NCF1 and regulates NADPH oxidase activation after LPS stimulation suggesting a similar mechanism during microbial infections. This Homo sapiens (Human) protein is Interleukin-1 receptor-associated kinase 4 (IRAK4).